The sequence spans 316 residues: Acetyl-coenzyme A carboxylase carboxyl transferase subunit beta (316 aa).

In terms of domain architecture, CoA carboxyltransferase N-terminal spans 29-298; sequence LWTKCPNCGV…LLSPLNSHHH (270 aa). Zn(2+) contacts are provided by Cys-33, Cys-36, Cys-52, and Cys-55. The segment at 33-55 adopts a C4-type zinc-finger fold; that stretch reads CPNCGVLAYTKDLLANQLVCLDC.

This sequence belongs to the AccD/PCCB family. In terms of assembly, acetyl-CoA carboxylase is a heterohexamer composed of biotin carboxyl carrier protein (AccB), biotin carboxylase (AccC) and two subunits each of ACCase subunit alpha (AccA) and ACCase subunit beta (AccD). Zn(2+) serves as cofactor.

It is found in the cytoplasm. It carries out the reaction N(6)-carboxybiotinyl-L-lysyl-[protein] + acetyl-CoA = N(6)-biotinyl-L-lysyl-[protein] + malonyl-CoA. Its pathway is lipid metabolism; malonyl-CoA biosynthesis; malonyl-CoA from acetyl-CoA: step 1/1. Its function is as follows. Component of the acetyl coenzyme A carboxylase (ACC) complex. Biotin carboxylase (BC) catalyzes the carboxylation of biotin on its carrier protein (BCCP) and then the CO(2) group is transferred by the transcarboxylase to acetyl-CoA to form malonyl-CoA. In Microcystis aeruginosa (strain NIES-843 / IAM M-2473), this protein is Acetyl-coenzyme A carboxylase carboxyl transferase subunit beta.